A 154-amino-acid polypeptide reads, in one-letter code: Histone H2B.5 (154 aa).

Over residues Met-1–Pro-25 the composition is skewed to basic and acidic residues. Residues Met-1–Lys-62 are disordered. Lys-7 and Lys-39 each carry N6-acetyllysine. A Glycyl lysine isopeptide (Lys-Gly) (interchain with G-Cter in ubiquitin) cross-link involves residue Lys-150.

The protein belongs to the histone H2B family. In terms of assembly, the nucleosome is a histone octamer containing two molecules each of H2A, H2B, H3 and H4 assembled in one H3-H4 heterotetramer and two H2A-H2B heterodimers. The octamer wraps approximately 147 bp of DNA. Can be acetylated to form H2BK6ac and H2BK33ac. In terms of processing, monoubiquitinated to form H2BK143ub1; may give a specific tag for epigenetic transcriptional activation.

The protein resides in the nucleus. Its subcellular location is the chromosome. Core component of nucleosome. Nucleosomes wrap and compact DNA into chromatin, limiting DNA accessibility to the cellular machineries which require DNA as a template. Histones thereby play a central role in transcription regulation, DNA repair, DNA replication and chromosomal stability. DNA accessibility is regulated via a complex set of post-translational modifications of histones, also called histone code, and nucleosome remodeling. This chain is Histone H2B.5, found in Zea mays (Maize).